The chain runs to 390 residues: UPF0229 protein Cbei_0567 (390 aa).

The segment at 77–108 is disordered; it reads SGVGNEKRGEKLGNGNKKLAKGNQGAGNEEGD. Residues 89 to 103 are compositionally biased toward low complexity; sequence GNGNKKLAKGNQGAG.

This sequence belongs to the UPF0229 family.

The polypeptide is UPF0229 protein Cbei_0567 (Clostridium beijerinckii (strain ATCC 51743 / NCIMB 8052) (Clostridium acetobutylicum)).